A 555-amino-acid chain; its full sequence is Phosphomethylpyrimidine synthase (555 aa).

Residues 78 to 104 form a disordered region; it reads VRDRWGFDNGSAESTKGELSMSERKPR. Residues N191, M220, Y249, H285, 305–307, 346–349, and E385 contribute to the substrate site; these read SRG and DALR. Residue H389 participates in Zn(2+) binding. Y412 provides a ligand contact to substrate. Position 453 (H453) interacts with Zn(2+). The [4Fe-4S] cluster site is built by C535, C538, and C543.

It belongs to the ThiC family. [4Fe-4S] cluster serves as cofactor.

The catalysed reaction is 5-amino-1-(5-phospho-beta-D-ribosyl)imidazole + S-adenosyl-L-methionine = 4-amino-2-methyl-5-(phosphooxymethyl)pyrimidine + CO + 5'-deoxyadenosine + formate + L-methionine + 3 H(+). Its pathway is cofactor biosynthesis; thiamine diphosphate biosynthesis. Its function is as follows. Catalyzes the synthesis of the hydroxymethylpyrimidine phosphate (HMP-P) moiety of thiamine from aminoimidazole ribotide (AIR) in a radical S-adenosyl-L-methionine (SAM)-dependent reaction. This Chlorobaculum parvum (strain DSM 263 / NCIMB 8327) (Chlorobium vibrioforme subsp. thiosulfatophilum) protein is Phosphomethylpyrimidine synthase.